The sequence spans 291 residues: Formamidopyrimidine-DNA glycosylase (291 aa).

Catalysis depends on Pro2, which acts as the Schiff-base intermediate with DNA. The Proton donor role is filled by Glu3. Lys60 serves as the catalytic Proton donor; for beta-elimination activity. DNA contacts are provided by His108 and Arg127. The FPG-type zinc-finger motif lies at 257–291 (WVYRRGGQACRICSTPIRRESLCGRGTHWCPNCQR). Arg281 acts as the Proton donor; for delta-elimination activity in catalysis.

The protein belongs to the FPG family. As to quaternary structure, monomer. It depends on Zn(2+) as a cofactor.

The catalysed reaction is Hydrolysis of DNA containing ring-opened 7-methylguanine residues, releasing 2,6-diamino-4-hydroxy-5-(N-methyl)formamidopyrimidine.. It carries out the reaction 2'-deoxyribonucleotide-(2'-deoxyribose 5'-phosphate)-2'-deoxyribonucleotide-DNA = a 3'-end 2'-deoxyribonucleotide-(2,3-dehydro-2,3-deoxyribose 5'-phosphate)-DNA + a 5'-end 5'-phospho-2'-deoxyribonucleoside-DNA + H(+). In terms of biological role, involved in base excision repair of DNA damaged by oxidation or by mutagenic agents. Acts as a DNA glycosylase that recognizes and removes damaged bases. Has a preference for oxidized purines, such as 7,8-dihydro-8-oxoguanine (8-oxoG). Has AP (apurinic/apyrimidinic) lyase activity and introduces nicks in the DNA strand. Cleaves the DNA backbone by beta-delta elimination to generate a single-strand break at the site of the removed base with both 3'- and 5'-phosphates. The protein is Formamidopyrimidine-DNA glycosylase of Prochlorococcus marinus (strain MIT 9313).